An 86-amino-acid chain; its full sequence is MeuNaTxbeta-1 (86 aa).

The N-terminal stretch at 1–20 is a signal peptide; it reads MMKIIIFLIVSSLVLIGVKT. The 63-residue stretch at 21 to 83 folds into the LCN-type CS-alpha/beta domain; it reads DNGYLLDKYT…LWHYETNKCN (63 aa). 4 disulfide bridges follow: Cys-32–Cys-82, Cys-36–Cys-57, Cys-43–Cys-64, and Cys-47–Cys-66.

As to expression, expressed by the venom gland.

The protein localises to the secreted. In terms of biological role, inhibits sodium channels (Nav). Also moderately inhibits human calcium-activated potassium channel KCa1.1/KCNMA1/BK (41.9% decrease at 2 uM toxin concentration). Shows moderate antimicrobial activity against both Gram-positive and -negative bacteria. The chain is MeuNaTxbeta-1 from Mesobuthus eupeus (Lesser Asian scorpion).